A 217-amino-acid chain; its full sequence is Uracil-DNA glycosylase (217 aa).

The Proton acceptor role is filled by D62.

This sequence belongs to the uracil-DNA glycosylase (UDG) superfamily. UNG family.

Its subcellular location is the cytoplasm. It carries out the reaction Hydrolyzes single-stranded DNA or mismatched double-stranded DNA and polynucleotides, releasing free uracil.. Excises uracil residues from the DNA which can arise as a result of misincorporation of dUMP residues by DNA polymerase or due to deamination of cytosine. This chain is Uracil-DNA glycosylase, found in Streptococcus pyogenes serotype M4 (strain MGAS10750).